The sequence spans 122 residues: UPF0382 membrane protein SH2409 (122 aa).

The next 4 helical transmembrane spans lie at 3–23 (LFII…AFGA), 46–66 (MYHG…SINV), 69–89 (AGWL…ILAL), and 98–118 (ITPI…ISTF).

The protein belongs to the UPF0382 family.

The protein localises to the cell membrane. The chain is UPF0382 membrane protein SH2409 from Staphylococcus haemolyticus (strain JCSC1435).